A 178-amino-acid polypeptide reads, in one-letter code: Large ribosomal subunit protein bL35m (178 aa).

This sequence belongs to the bacterial ribosomal protein bL35 family.

The protein resides in the mitochondrion. The sequence is that of Large ribosomal subunit protein bL35m (mRpL35) from Drosophila melanogaster (Fruit fly).